Here is an 810-residue protein sequence, read N- to C-terminus: Transmembrane GTPase Marf (810 aa).

Residues 1 to 637 are Cytoplasmic-facing; the sequence is MAAYLNRTIS…TTTPVEATPV (637 aa). Residue T8 is modified to Phosphothreonine. Residues 13–40 form a disordered region; it reads TGQTGPADDDRHASSTDTVDKSGPGSPL. A compositionally biased stretch (basic and acidic residues) spans 20–32; it reads DDDRHASSTDTVD. At S38 the chain carries Phosphoserine. Positions 134–382 constitute a Dynamin-type G domain; sequence QRDHMKVAFF…IRYFEFQDFE (249 aa). Residues 144 to 151 are G1 motif; that stretch reads GRTSNGKS. 147 to 152 contacts GTP; that stretch reads SNGKSS. The segment at 170 to 171 is G2 motif; it reads TT. A G3 motif region spans residues 239–242; that stretch reads DSPG. Residue 298-301 coordinates GTP; that stretch reads NRWD. The segment at 298-301 is G4 motif; that stretch reads NRWD. Residue K327 is a region of interest, G5 motif. S345 is a GTP binding site. Positions 427 to 476 form a coiled coil; it reads RNLKQDQKNLLTERIQGTETQMMQVTREMKMKIHNMVEEVEEKVSKALNE. T553 bears the Phosphothreonine mark. A Phosphoserine modification is found at S554. Residue T555 is modified to Phosphothreonine. The tract at residues 609 to 630 is disordered; the sequence is GQPALVNRQSSIGHSVSTPTTT. A helical transmembrane segment spans residues 638 to 648; sequence CLLPAPVVAGI. Residues 649 to 668 lie on the Mitochondrial intermembrane side of the membrane; that stretch reads TPEQLSLISRFAVSSIGSQG. Residues 669–689 traverse the membrane as a helical segment; the sequence is TVGGLVVAGVMLKTIGWRVLV. The Cytoplasmic portion of the chain corresponds to 690-810; sequence GVGALYGCIY…IFEHNYISPQ (121 aa). A coiled-coil region spans residues 759 to 806; it reads TATTDMNDELKTLDSQLNILEANQKQLKLLRNKANYIQNELDIFEHNY.

It belongs to the TRAFAC class dynamin-like GTPase superfamily. Dynamin/Fzo/YdjA family. Mitofusin subfamily. Interacts with Mul1. Post-translationally, ubiquitinated by park and Mul1. Ubiquitinated, probably by HUWE1, when dietary stearate (C18:0) levels are low; ubiquitination inhibits mitochondrial fusion. Widely expressed in embryos, accumulating in the mesoderm and endoderm during gut development. In the male germ line, it is expressed in spermatogonia, spermatocytes and early spermatids.

The protein localises to the mitochondrion outer membrane. The catalysed reaction is GTP + H2O = GDP + phosphate + H(+). Functionally, mitochondrial outer membrane GTPase that mediates mitochondrial clustering and fusion. Mitochondrial fusion is the physical merging of mitochondria that gives rise to mitochondrial networks, and this process is counterbalanced by mitochondrial fission which fragments networks. Promotes, but is not required for park recruitment to dysfunctional mitochondria. The chain is Transmembrane GTPase Marf (Marf) from Drosophila melanogaster (Fruit fly).